Consider the following 88-residue polypeptide: Protein ORGAN SIZE RELATED 1 (88 aa).

The interval 25–76 (ITARSVALLLFLSLLLLILPPFLPPLPPPPATLLLLPLLLMILLIFLAFSPS) is organ Size Related (OSR) domain. 2 helical membrane-spanning segments follow: residues 30–50 (VALL…LPPL) and 53–73 (PPAT…FLAF).

The protein belongs to the plant organ size related (OSR) protein family. Mostly expressed in flowers, and, to a lower extent, in leaves and cotyledons.

Its subcellular location is the membrane. The protein localises to the endoplasmic reticulum. The protein resides in the nucleus. It localises to the cytoplasm. Functionally, together with ARGOS and ARL, regulates organ growth and final organ size. Promotes both cell expansion and proliferation-dependent organ growth, in an ANT-dependent manner. The protein is Protein ORGAN SIZE RELATED 1 of Arabidopsis thaliana (Mouse-ear cress).